A 381-amino-acid chain; its full sequence is Probable serine/threonine-protein kinase PBL22 (381 aa).

Cys3 is lipidated: S-palmitoyl cysteine. Thr64 is subject to Phosphothreonine. One can recognise a Protein kinase domain in the interval 75-351 (FREGNIIGKG…GDVVVAFEYI (277 aa)). Residues 81–89 (IGKGGFGSV) and Lys103 contribute to the ATP site. Tyr148 is modified (phosphotyrosine). Asp201 serves as the catalytic Proton acceptor. Ser235 carries the phosphoserine modification. Residues Thr236 and Thr241 each carry the phosphothreonine modification. Position 249 is a phosphotyrosine (Tyr249). The tract at residues 361-381 (RRTARKSTDSNRLRRETKQSY) is disordered.

It belongs to the protein kinase superfamily. Ser/Thr protein kinase family. Palmitoylation at Cys-3 and Cys-6 are required for plasma membrane location.

The protein localises to the cell membrane. The catalysed reaction is L-seryl-[protein] + ATP = O-phospho-L-seryl-[protein] + ADP + H(+). The enzyme catalyses L-threonyl-[protein] + ATP = O-phospho-L-threonyl-[protein] + ADP + H(+). In terms of biological role, may be involved in plant defense signaling. This Arabidopsis thaliana (Mouse-ear cress) protein is Probable serine/threonine-protein kinase PBL22.